We begin with the raw amino-acid sequence, 126 residues long: Profilin-3 (126 aa).

It belongs to the profilin family. Occurs in many kinds of cells as a complex with monomeric actin in a 1:1 ratio.

It localises to the cytoplasm. Its subcellular location is the cytoskeleton. Its function is as follows. Binds to actin and affects the structure of the cytoskeleton. At high concentrations, profilin prevents the polymerization of actin, whereas it enhances it at low concentrations. By binding to PIP2, it inhibits the formation of IP3 and DG. The protein is Profilin-3 (proC) of Dictyostelium discoideum (Social amoeba).